Reading from the N-terminus, the 214-residue chain is tRNA (guanine-N(7)-)-methyltransferase (214 aa).

4 residues coordinate S-adenosyl-L-methionine: Glu44, Glu69, Asp96, and Asp118. Asp118 is an active-site residue. Substrate contacts are provided by residues Lys122, Asp154, and 191 to 194; that span reads TEYE.

This sequence belongs to the class I-like SAM-binding methyltransferase superfamily. TrmB family.

It carries out the reaction guanosine(46) in tRNA + S-adenosyl-L-methionine = N(7)-methylguanosine(46) in tRNA + S-adenosyl-L-homocysteine. The protein operates within tRNA modification; N(7)-methylguanine-tRNA biosynthesis. Its function is as follows. Catalyzes the formation of N(7)-methylguanine at position 46 (m7G46) in tRNA. This is tRNA (guanine-N(7)-)-methyltransferase from Listeria monocytogenes serotype 4a (strain HCC23).